The chain runs to 195 residues: dCTP deaminase (195 aa).

DCTP contacts are provided by residues 110–115 (RSSLAR), D128, 136–138 (VLE), Y171, K178, and Q182. E138 acts as the Proton donor/acceptor in catalysis. Residues 171-195 (YSSRKDAKYKNQQSAVASRIDEDKE) are disordered.

Belongs to the dCTP deaminase family. Homotrimer.

The catalysed reaction is dCTP + H2O + H(+) = dUTP + NH4(+). The protein operates within pyrimidine metabolism; dUMP biosynthesis; dUMP from dCTP (dUTP route): step 1/2. Functionally, catalyzes the deamination of dCTP to dUTP. This Haemophilus influenzae (strain ATCC 51907 / DSM 11121 / KW20 / Rd) protein is dCTP deaminase.